The following is a 199-amino-acid chain: Glycerol-3-phosphate acyltransferase (199 aa).

5 helical membrane-spanning segments follow: residues 3–23 (IKILYIIITYLCGSIPSAYIV), 55–75 (VITLIADILKGFIPVYFATFI), 79–99 (FSYSVAVAAAAMVGHVFTIFL), 113–133 (VFFALMRWPSLIALAIFGLAF), and 155–175 (YFLGYSTEVVIFTFAITLLII).

This sequence belongs to the PlsY family. In terms of assembly, probably interacts with PlsX.

The protein resides in the cell inner membrane. The enzyme catalyses an acyl phosphate + sn-glycerol 3-phosphate = a 1-acyl-sn-glycero-3-phosphate + phosphate. The protein operates within lipid metabolism; phospholipid metabolism. Its function is as follows. Catalyzes the transfer of an acyl group from acyl-phosphate (acyl-PO(4)) to glycerol-3-phosphate (G3P) to form lysophosphatidic acid (LPA). This enzyme utilizes acyl-phosphate as fatty acyl donor, but not acyl-CoA or acyl-ACP. The chain is Glycerol-3-phosphate acyltransferase from Endomicrobium trichonymphae.